The following is a 1215-amino-acid chain: DNA-directed RNA polymerase subunit beta' (1215 aa).

Zn(2+)-binding residues include Cys60, Cys62, Cys75, and Cys78. Mg(2+)-binding residues include Asp450, Asp452, and Asp454. Positions 818, 892, 899, and 902 each coordinate Zn(2+).

Belongs to the RNA polymerase beta' chain family. As to quaternary structure, the RNAP catalytic core consists of 2 alpha, 1 beta, 1 beta' and 1 omega subunit. When a sigma factor is associated with the core the holoenzyme is formed, which can initiate transcription. Mg(2+) is required as a cofactor. Zn(2+) serves as cofactor.

It carries out the reaction RNA(n) + a ribonucleoside 5'-triphosphate = RNA(n+1) + diphosphate. Functionally, DNA-dependent RNA polymerase catalyzes the transcription of DNA into RNA using the four ribonucleoside triphosphates as substrates. The chain is DNA-directed RNA polymerase subunit beta' from Streptococcus sanguinis (strain SK36).